Here is a 325-residue protein sequence, read N- to C-terminus: Tetraacyldisaccharide 4'-kinase (325 aa).

55-62 (TAGGNGKT) is an ATP binding site.

Belongs to the LpxK family.

It catalyses the reaction a lipid A disaccharide + ATP = a lipid IVA + ADP + H(+). Its pathway is glycolipid biosynthesis; lipid IV(A) biosynthesis; lipid IV(A) from (3R)-3-hydroxytetradecanoyl-[acyl-carrier-protein] and UDP-N-acetyl-alpha-D-glucosamine: step 6/6. Functionally, transfers the gamma-phosphate of ATP to the 4'-position of a tetraacyldisaccharide 1-phosphate intermediate (termed DS-1-P) to form tetraacyldisaccharide 1,4'-bis-phosphate (lipid IVA). The polypeptide is Tetraacyldisaccharide 4'-kinase (Salmonella paratyphi A (strain ATCC 9150 / SARB42)).